A 492-amino-acid chain; its full sequence is MLSPPHSGTLEKLFQYIDLHQDEFVQTLKEWVAIESDSVQPMPRLRQELFRMMALAADKLRNLGARVDSVDLGSQQMPDGQSLPTPPIILAELGNDPKKPSVCFYGHLDVQPAQKEDGWLTDPYTLTEVDGKLYGRGATDNKGPVLAWINAVSTFRALQQDLPVNVKFILEGMEEAGSVALEELVKREKDNFFSGVDYIVISDNLWLSQKKPALTCGTRGNCYFTVEVKCRDQDFHSGTFGGILNEPMADLVALLGSLVDSSGHILVPGIYDQMAPITEEEKTMYENIDLDLEEYQKSSRVERFLFDTKEELLTHLWRYPSLSIHGIEGAFDEPGTKTVIPGRVLGKFSIRLVPHMTPSVVETQVTQHLEAVFSKRNSFNKMAVSMVLGLQPWTANINGTQYLAARRAIQTVFGVDPDMIQDGSTIPIAKIFQDITQKSVMMLPLGAVDDGEHSQNEKINRWNYIQGSKLFAAFFLELSKLHSGQQVPSGAF.

His107 serves as a coordination point for Zn(2+). Asp109 is a catalytic residue. Asp140 lines the Zn(2+) pocket. Glu174 (proton acceptor) is an active-site residue. Position 175 (Glu175) interacts with Zn(2+). Phosphoserine is present on Ser194. Zn(2+) contacts are provided by Asp203 and His453.

The protein belongs to the peptidase M20A family. As to quaternary structure, homodimer. Zn(2+) is required as a cofactor. As to expression, detected exclusively in kidney.

The protein resides in the secreted. The catalysed reaction is Preferential hydrolysis of the beta-Ala-|-His dipeptide (carnosine), and also anserine, Xaa-|-His dipeptides and other dipeptides including homocarnosine.. It catalyses the reaction carnosine + H2O = beta-alanine + L-histidine. It carries out the reaction anserine + H2O = N(pros)-methyl-L-histidine + beta-alanine. The enzyme catalyses L-alanyl-L-histidine + H2O = L-histidine + L-alanine. The catalysed reaction is glycyl-L-histidine + H2O = L-histidine + glycine. It catalyses the reaction L-homocarnosine + H2O = 4-aminobutanoate + L-histidine. Catalyzes the peptide bond hydrolysis in Xaa-His dipeptides, displaying the highest activity toward carnosine (beta-alanyl-L-histidine) and anserine (beta-alanyl-3-methyl-histidine). In Rattus norvegicus (Rat), this protein is Beta-Ala-His dipeptidase (Cndp1).